We begin with the raw amino-acid sequence, 450 residues long: Putative zinc metalloprotease PA3649 (450 aa).

Position 21 (His21) interacts with Zn(2+). Residue Glu22 is part of the active site. Position 25 (His25) interacts with Zn(2+). The chain crosses the membrane as a helical span at residues Ile97–Ala119. In terms of domain architecture, PDZ spans Gly199–Val291. Residues Ala425 to Val444 traverse the membrane as a helical segment.

Belongs to the peptidase M50B family. The cofactor is Zn(2+).

It is found in the cell inner membrane. This chain is Putative zinc metalloprotease PA3649, found in Pseudomonas aeruginosa (strain ATCC 15692 / DSM 22644 / CIP 104116 / JCM 14847 / LMG 12228 / 1C / PRS 101 / PAO1).